The sequence spans 247 residues: ATP synthase subunit a (247 aa).

Transmembrane regions (helical) follow at residues 24–44 (IAFT…AAMM), 82–102 (FFPL…VGII), 112–132 (IIVT…YGFY), 141–161 (LFVP…IEII), 181–201 (GHVT…LGFV), and 206–226 (ALLP…VAFL).

This sequence belongs to the ATPase A chain family. F-type ATPases have 2 components, CF(1) - the catalytic core - and CF(0) - the membrane proton channel. CF(1) has five subunits: alpha(3), beta(3), gamma(1), delta(1), epsilon(1). CF(0) has four main subunits: a, b, b' and c.

It localises to the cell inner membrane. Its function is as follows. Key component of the proton channel; it plays a direct role in the translocation of protons across the membrane. In Bradyrhizobium sp. (strain ORS 278), this protein is ATP synthase subunit a.